A 503-amino-acid polypeptide reads, in one-letter code: Lysine--tRNA ligase (503 aa).

Glu-414 and Glu-421 together coordinate Mg(2+).

This sequence belongs to the class-II aminoacyl-tRNA synthetase family. Homodimer. Mg(2+) serves as cofactor.

Its subcellular location is the cytoplasm. It catalyses the reaction tRNA(Lys) + L-lysine + ATP = L-lysyl-tRNA(Lys) + AMP + diphosphate. The sequence is that of Lysine--tRNA ligase from Neisseria gonorrhoeae (strain NCCP11945).